The following is a 92-amino-acid chain: Protein S100-A5 (92 aa).

2 consecutive EF-hand domains span residues 12 to 47 (MVTT…LGEM) and 47 to 82 (MKES…LCMA). Ca(2+) contacts are provided by Thr28, Glu33, Asp60, Asn62, Asp64, Glu66, and Glu71.

It belongs to the S-100 family. As to quaternary structure, homodimer.

Functionally, binds calcium, zinc and copper. One subunit can simultaneously bind 2 calcium ions or 2 copper ions plus 1 zinc ion. Calcium and copper ions compete for the same binding sites. This chain is Protein S100-A5 (S100A5), found in Homo sapiens (Human).